Reading from the N-terminus, the 175-residue chain is MNLKDYIRSIPDYPKKGILFRDITTLIKDADAFEECINQIIERSKNYKIDKIAAIESRGFVFASAVSYLLKKPFIMFRKKNKLPAETHSVDFELEYGTATIEVHKDSIDKDDSVLIIDDLIATGGTAEAAAKLVEMSNAKIAAFVFAINLFDLGGSDNLVKKGYKVENLMDFPGH.

The protein belongs to the purine/pyrimidine phosphoribosyltransferase family. Homodimer.

The protein resides in the cytoplasm. The catalysed reaction is AMP + diphosphate = 5-phospho-alpha-D-ribose 1-diphosphate + adenine. The protein operates within purine metabolism; AMP biosynthesis via salvage pathway; AMP from adenine: step 1/1. Its function is as follows. Catalyzes a salvage reaction resulting in the formation of AMP, that is energically less costly than de novo synthesis. The protein is Adenine phosphoribosyltransferase of Pelagibacter ubique (strain HTCC1062).